A 42-amino-acid chain; its full sequence is Large ribosomal subunit protein bL36 (42 aa).

It belongs to the bacterial ribosomal protein bL36 family.

The chain is Large ribosomal subunit protein bL36 from Ehrlichia chaffeensis (strain ATCC CRL-10679 / Arkansas).